We begin with the raw amino-acid sequence, 1839 residues long: Adenylate cyclase (1839 aa).

6 disordered regions span residues M1–E21, I43–S87, T126–S245, K272–A315, K332–D388, and E400–K468. Residues S165–S211 show a composition bias toward polar residues. Residues Q212–Q221 show a composition bias toward low complexity. A compositionally biased stretch (basic and acidic residues) spans R222–Q233. Basic residues predominate over residues K332–Y355. Basic and acidic residues predominate over residues P361–E376. Residues S407–G428 are compositionally biased toward low complexity. Residues R494–L574 form the Ras-associating domain. 22 LRR repeats span residues T632 to S655, L659 to A679, K681 to L702, N704 to K726, N727 to C748, N750 to L771, K773 to K794, N795 to L816, Q817 to T834, R835 to M856, N858 to K879, R882 to L903, R905 to L926, S928 to E950, L951 to F971, S982 to F1004, N1006 to N1027, L1028 to H1048, S1051 to S1073, R1074 to W1096, D1103 to E1124, and L1135 to I1160. The PPM-type phosphatase domain maps to R1173–L1439. Residues A1483–S1620 enclose the Guanylate cyclase domain. Mg(2+) is bound by residues D1488 and D1531.

It belongs to the adenylyl cyclase class-3 family. Requires Mg(2+) as cofactor.

It catalyses the reaction ATP = 3',5'-cyclic AMP + diphosphate. In terms of biological role, plays essential roles in regulation of cellular metabolism by catalyzing the synthesis of a second messenger, cAMP. The protein is Adenylate cyclase (CYR1) of Lachancea kluyveri (Yeast).